The primary structure comprises 371 residues: Chaperone protein DnaJ (371 aa).

Residues Asp-4–Gly-68 enclose the J domain. The CR-type zinc finger occupies Gly-134–Gln-212. Zn(2+) is bound by residues Cys-147, Cys-150, Cys-164, Cys-167, Cys-186, Cys-189, Cys-200, and Cys-203. CXXCXGXG motif repeat units lie at residues Cys-147–Gly-154, Cys-164–Gly-171, Cys-186–Gly-193, and Cys-200–Gly-207.

The protein belongs to the DnaJ family. Homodimer. It depends on Zn(2+) as a cofactor.

It is found in the cytoplasm. Participates actively in the response to hyperosmotic and heat shock by preventing the aggregation of stress-denatured proteins and by disaggregating proteins, also in an autonomous, DnaK-independent fashion. Unfolded proteins bind initially to DnaJ; upon interaction with the DnaJ-bound protein, DnaK hydrolyzes its bound ATP, resulting in the formation of a stable complex. GrpE releases ADP from DnaK; ATP binding to DnaK triggers the release of the substrate protein, thus completing the reaction cycle. Several rounds of ATP-dependent interactions between DnaJ, DnaK and GrpE are required for fully efficient folding. Also involved, together with DnaK and GrpE, in the DNA replication of plasmids through activation of initiation proteins. This Rickettsia felis (strain ATCC VR-1525 / URRWXCal2) (Rickettsia azadi) protein is Chaperone protein DnaJ.